The chain runs to 142 residues: Ribosome-binding factor A (142 aa).

The segment at 118 to 142 is disordered; it reads DKNGDAEVDDTQVDDEPSVDSEKGE. The span at 123–136 shows a compositional bias: acidic residues; that stretch reads AEVDDTQVDDEPSV.

It belongs to the RbfA family. As to quaternary structure, monomer. Binds 30S ribosomal subunits, but not 50S ribosomal subunits or 70S ribosomes.

It localises to the cytoplasm. One of several proteins that assist in the late maturation steps of the functional core of the 30S ribosomal subunit. Associates with free 30S ribosomal subunits (but not with 30S subunits that are part of 70S ribosomes or polysomes). Required for efficient processing of 16S rRNA. May interact with the 5'-terminal helix region of 16S rRNA. The protein is Ribosome-binding factor A of Colwellia psychrerythraea (strain 34H / ATCC BAA-681) (Vibrio psychroerythus).